We begin with the raw amino-acid sequence, 207 residues long: Sodium/potassium-transporting ATPase subunit beta-1-interacting protein 1 (207 aa).

The next 3 helical transmembrane spans lie at 2–22 (GRCD…VAAL), 35–55 (APIL…FGTV), and 62–82 (LILY…IICF). N100 is a glycosylation site (N-linked (GlcNAc...) asparagine). The chain crosses the membrane as a helical span at residues 147–167 (VVSSALQVFLALFGFVYACYV).

It belongs to the NKAIN family. Interacts with atp1b1 C-terminus.

Its subcellular location is the cell membrane. The sequence is that of Sodium/potassium-transporting ATPase subunit beta-1-interacting protein 1 (nkain1) from Danio rerio (Zebrafish).